Consider the following 89-residue polypeptide: Small ribosomal subunit protein uS15 (89 aa).

Basic and acidic residues predominate over residues 1 to 21 (MVLDPTQKKSVIDAHAKHEGD). The interval 1-24 (MVLDPTQKKSVIDAHAKHEGDTGS) is disordered.

It belongs to the universal ribosomal protein uS15 family. As to quaternary structure, part of the 30S ribosomal subunit. Forms a bridge to the 50S subunit in the 70S ribosome, contacting the 23S rRNA.

One of the primary rRNA binding proteins, it binds directly to 16S rRNA where it helps nucleate assembly of the platform of the 30S subunit by binding and bridging several RNA helices of the 16S rRNA. Its function is as follows. Forms an intersubunit bridge (bridge B4) with the 23S rRNA of the 50S subunit in the ribosome. The chain is Small ribosomal subunit protein uS15 from Desulfovibrio desulfuricans (strain ATCC 27774 / DSM 6949 / MB).